Consider the following 245-residue polypeptide: Phosphoribosylaminoimidazole-succinocarboxamide synthase (245 aa).

It belongs to the SAICAR synthetase family.

The catalysed reaction is 5-amino-1-(5-phospho-D-ribosyl)imidazole-4-carboxylate + L-aspartate + ATP = (2S)-2-[5-amino-1-(5-phospho-beta-D-ribosyl)imidazole-4-carboxamido]succinate + ADP + phosphate + 2 H(+). Its pathway is purine metabolism; IMP biosynthesis via de novo pathway; 5-amino-1-(5-phospho-D-ribosyl)imidazole-4-carboxamide from 5-amino-1-(5-phospho-D-ribosyl)imidazole-4-carboxylate: step 1/2. This chain is Phosphoribosylaminoimidazole-succinocarboxamide synthase, found in Nostoc punctiforme (strain ATCC 29133 / PCC 73102).